A 608-amino-acid chain; its full sequence is Replication protein E1 (608 aa).

The Nuclear localization signal signature appears at 83–85; that stretch reads KRK. Ser88 and Ser96 each carry phosphoserine; by host. The DNA-binding region stretch occupies residues 148 to 311; sequence QGGVGSGHYT…TMIHHQTADS (164 aa). The region spanning 410–560 is the SF3 helicase domain; sequence LNFIVFLDKF…FPFDANDTPL (151 aa). 436 to 443 contacts ATP; that stretch reads GPPDTGKS. Lys517 is covalently cross-linked (Glycyl lysine isopeptide (Lys-Gly) (interchain with G-Cter in SUMO)).

This sequence belongs to the papillomaviridae E1 protein family. Can form hexamers. Interacts with E2 protein; this interaction increases E1 DNA binding specificity. Interacts with host DNA polymerase subunit POLA2. Interacts with host single stranded DNA-binding protein RPA1. Interacts with host TOP1; this interaction stimulates the enzymatic activity of TOP1. In terms of processing, phosphorylated. Post-translationally, sumoylated.

It is found in the host nucleus. The catalysed reaction is Couples ATP hydrolysis with the unwinding of duplex DNA by translocating in the 3'-5' direction.. The enzyme catalyses ATP + H2O = ADP + phosphate + H(+). ATP-dependent DNA 3'-5' helicase required for initiation of viral DNA replication. It forms a complex with the viral E2 protein. The E1-E2 complex binds to the replication origin which contains binding sites for both proteins. During the initial step, a dimer of E1 interacts with a dimer of protein E2 leading to a complex that binds the viral origin of replication with high specificity. Then, a second dimer of E1 displaces the E2 dimer in an ATP-dependent manner to form the E1 tetramer. Following this, two E1 monomers are added to each half of the site, which results in the formation of two E1 trimers on the viral ori. Subsequently, two hexamers will be created. The double hexamer acts as a bi-directional helicase machinery and unwinds the viral DNA and then recruits the host DNA polymerase to start replication. The sequence is that of Replication protein E1 from Homo sapiens (Human).